Here is a 595-residue protein sequence, read N- to C-terminus: S-(+)-linalool synthase, chloroplastic (595 aa).

The N-terminal 46 residues, 1–46, are a transit peptide targeting the chloroplast; sequence MVCHVFSSFSSSLIRVLEAPLLLPAASASSSSSSSPASRSGGRRRR. Low complexity predominate over residues 27-40; the sequence is SASSSSSSSPASRS. The tract at residues 27 to 54 is disordered; that stretch reads SASSSSSSSPASRSGGRRRRAAHVRPSP. Residues R309, D346, D350, R487, and D490 each contribute to the (2E)-geranyl diphosphate site. The Mg(2+) site is built by D346 and D350. The DDXXD motif signature appears at 346–350; it reads DDIFD. Mg(2+) contacts are provided by D490, S494, and E498.

The protein belongs to the terpene synthase family. Tpsb subfamily. The cofactor is Mg(2+). It depends on Mn(2+) as a cofactor.

Its subcellular location is the plastid. It localises to the chloroplast. It carries out the reaction (2E)-geranyl diphosphate + H2O = (S)-linalool + diphosphate. It functions in the pathway secondary metabolite biosynthesis; terpenoid biosynthesis. Functionally, involved in monoterpene (C10) biosynthesis. The major product is S-(+)-linalool. Linalool production is induced by jasmonate in response to pathogen attack, it possesses antibacterial activity and is important for resistance to the bacterial blight pathogen Xanthomonas oryzae pv. oryzae (Xoo). Plants over-expressing linalool synthase display enhanced resistance to Xoo. This Oryza sativa subsp. japonica (Rice) protein is S-(+)-linalool synthase, chloroplastic.